The chain runs to 372 residues: tRNA 2-selenouridine synthase (372 aa).

Positions 17 to 140 (FLQDIPLIDV…LRNFLLTTLE (124 aa)) constitute a Rhodanese domain. C100 functions as the S-selanylcysteine intermediate in the catalytic mechanism.

This sequence belongs to the SelU family. In terms of assembly, monomer.

The enzyme catalyses 5-methylaminomethyl-2-thiouridine(34) in tRNA + selenophosphate + (2E)-geranyl diphosphate + H2O + H(+) = 5-methylaminomethyl-2-selenouridine(34) in tRNA + (2E)-thiogeraniol + phosphate + diphosphate. The catalysed reaction is 5-methylaminomethyl-2-thiouridine(34) in tRNA + (2E)-geranyl diphosphate = 5-methylaminomethyl-S-(2E)-geranyl-thiouridine(34) in tRNA + diphosphate. It catalyses the reaction 5-methylaminomethyl-S-(2E)-geranyl-thiouridine(34) in tRNA + selenophosphate + H(+) = 5-methylaminomethyl-2-(Se-phospho)selenouridine(34) in tRNA + (2E)-thiogeraniol. It carries out the reaction 5-methylaminomethyl-2-(Se-phospho)selenouridine(34) in tRNA + H2O = 5-methylaminomethyl-2-selenouridine(34) in tRNA + phosphate. Involved in the post-transcriptional modification of the uridine at the wobble position (U34) of tRNA(Lys), tRNA(Glu) and tRNA(Gln). Catalyzes the conversion of 2-thiouridine (S2U-RNA) to 2-selenouridine (Se2U-RNA). Acts in a two-step process involving geranylation of 2-thiouridine (S2U) to S-geranyl-2-thiouridine (geS2U) and subsequent selenation of the latter derivative to 2-selenouridine (Se2U) in the tRNA chain. The polypeptide is tRNA 2-selenouridine synthase (Serratia proteamaculans (strain 568)).